An 89-amino-acid chain; its full sequence is UPF0147 protein Saci_0891 (89 aa).

It belongs to the UPF0147 family.

The polypeptide is UPF0147 protein Saci_0891 (Sulfolobus acidocaldarius (strain ATCC 33909 / DSM 639 / JCM 8929 / NBRC 15157 / NCIMB 11770)).